Reading from the N-terminus, the 713-residue chain is Metal transporter CNNM3 (713 aa).

Residues 7–29 traverse the membrane as a helical segment; that stretch reads AVVGWLGWVLAAFCLGSTAGEAA. Asn-73 is a glycosylation site (N-linked (GlcNAc...) asparagine). Residues 136–314 form the CNNM transmembrane domain; sequence EAAPPWALGL…DPYSDLSKGV (179 aa). Transmembrane regions (helical) follow at residues 137-157, 199-219, 227-247, and 267-287; these read AAPP…AAVA, CALG…AVLL, AVPA…VLPA, and LAVL…ELAA. 2 consecutive CBS domains span residues 324–385 and 392–458; these read LTPL…CTPL and YNHP…ILDE. The segment at 664-713 is disordered; it reads LPPSPENAELQAIPGSQTRLLGDKSRETAGSTNSRPSIPVEESPGRNPGV. Residues Ser-667 and Ser-706 each carry the phosphoserine modification.

Belongs to the ACDP family. As to expression, widely expressed with highest levels in brain, kidney, liver, lung and heart.

It localises to the cell membrane. Probable metal transporter. The polypeptide is Metal transporter CNNM3 (Cnnm3) (Mus musculus (Mouse)).